The following is a 384-amino-acid chain: dTDP-dihydrostreptose--streptidine-6-phosphate dihydrostreptosyltransferase (384 aa).

The enzyme catalyses dTDP-L-dihydrostreptose + streptidine 6-phosphate = O-(1-&gt;4)-alpha-L-dihydrostreptosyl-streptidine 6-phosphate + dTDP + H(+). It functions in the pathway antibiotic biosynthesis; streptomycin biosynthesis. Its function is as follows. Is probably a dihydrostreptosyl glycosyltransferase, involved in the first glycosylation step condensing streptidine-6-phosphate and dihydrostreptose. The chain is dTDP-dihydrostreptose--streptidine-6-phosphate dihydrostreptosyltransferase (strH) from Streptomyces griseus.